The following is a 112-amino-acid chain: Gastrula zinc finger protein XlCGF9.1 (112 aa).

4 C2H2-type zinc fingers span residues 6–28 (FICSDCGKCFNDSSILIRHMKIH), 34–56 (FCCPQCGRKFRRRAHLIVHERTH), 62–84 (FTCPECGKSFARRSHLMDHRIIH), and 90–112 (YSCPECGKCFGLQGYLNKHFKIH).

This sequence belongs to the krueppel C2H2-type zinc-finger protein family.

The protein resides in the nucleus. May be involved in transcriptional regulation. In Xenopus laevis (African clawed frog), this protein is Gastrula zinc finger protein XlCGF9.1.